Here is a 116-residue protein sequence, read N- to C-terminus: uncharacterized protein (116 aa).

This is an uncharacterized protein from Homo sapiens (Human).